The sequence spans 623 residues: Glutathione import ATP-binding protein GsiA (623 aa).

2 consecutive ABC transporter domains span residues 15-269 and 314-564; these read VENL…RALL and LRVR…RKLL. ATP-binding positions include 49–56 and 357–364; these read GESGSGKS.

It belongs to the ABC transporter superfamily. Glutathione importer (TC 3.A.1.5.11) family. The complex is composed of two ATP-binding proteins (GsiA), two transmembrane proteins (GsiC and GsiD) and a solute-binding protein (GsiB).

It localises to the cell inner membrane. The catalysed reaction is glutathione(out) + ATP + H2O = glutathione(in) + ADP + phosphate + H(+). In terms of biological role, part of the ABC transporter complex GsiABCD involved in glutathione import. Responsible for energy coupling to the transport system. This Escherichia coli O157:H7 protein is Glutathione import ATP-binding protein GsiA.